The primary structure comprises 302 residues: Probable 2-(5''-triphosphoribosyl)-3'-dephosphocoenzyme-A synthase 1 (302 aa).

This sequence belongs to the CitG/MdcB family.

The catalysed reaction is 3'-dephospho-CoA + ATP = 2'-(5''-triphospho-alpha-D-ribosyl)-3'-dephospho-CoA + adenine. This is Probable 2-(5''-triphosphoribosyl)-3'-dephosphocoenzyme-A synthase 1 from Salmonella paratyphi A (strain ATCC 9150 / SARB42).